A 126-amino-acid chain; its full sequence is Small ribosomal subunit protein bS6 (126 aa).

The segment at 107 to 126 (RDRERGERSERPRDDFAPAA) is disordered.

Belongs to the bacterial ribosomal protein bS6 family.

In terms of biological role, binds together with bS18 to 16S ribosomal RNA. This is Small ribosomal subunit protein bS6 from Caulobacter sp. (strain K31).